We begin with the raw amino-acid sequence, 272 residues long: uncharacterized protein (272 aa).

4 consecutive transmembrane segments (helical) span residues 9 to 29 (PVGF…GSGV), 38 to 58 (LTSF…SFPP), 154 to 174 (AGEF…VLML), and 188 to 208 (AIAL…FNPI). At 209 to 272 (AAKLEEKTES…KTKKGSVHEA (64 aa)) the chain is on the cytoplasmic side.

Belongs to the MotA family.

The protein resides in the cell membrane. May be involved in some transport function. This is an uncharacterized protein from Bacillus subtilis (strain 168).